A 426-amino-acid polypeptide reads, in one-letter code: Peptidoglycan DD-endopeptidase ShyB (426 aa).

The signal sequence occupies residues 1-21; that stretch reads MGQFRFLALIVAVLCFSVALF. Residues 32–48 are compositionally biased toward polar residues; sequence SYSVPLNQSVNTSQPPS. Residues 32–55 form a disordered region; the sequence is SYSVPLNQSVNTSQPPSSEMVPSD. Zn(2+) is bound by residues His-291, Asp-295, and His-372.

It belongs to the peptidase M23B family. In terms of assembly, monomer. Zn(2+) serves as cofactor.

Its subcellular location is the periplasm. It participates in cell wall degradation; peptidoglycan degradation. Not inhibited by metal chelator EDTA. Its function is as follows. Cell wall peptidoglycan (PG) DD-endopeptidase, which may act as a substitute for other zinc-dependent PG endopeptidases (ShyA and ShyC) during zinc starvation. Hydrolyzes peptide cross-links which covalently connect adjacent PG strands probably to allow insertion of new glycans and thus cell wall expansion. Degrades purified whole PG sacculi in vitro. It is unclear how it is able to function in low zinc environments, but that may possibly be due to binding zinc with very high affinity, utilizing an alternative metal cofactor or that it may function independently of a bound metal cofactor. In Vibrio cholerae serotype O1 (strain ATCC 39315 / El Tor Inaba N16961), this protein is Peptidoglycan DD-endopeptidase ShyB.